Consider the following 118-residue polypeptide: Large ribosomal subunit protein bL20 (118 aa).

The protein belongs to the bacterial ribosomal protein bL20 family.

Binds directly to 23S ribosomal RNA and is necessary for the in vitro assembly process of the 50S ribosomal subunit. It is not involved in the protein synthesizing functions of that subunit. In Lactobacillus johnsonii (strain CNCM I-12250 / La1 / NCC 533), this protein is Large ribosomal subunit protein bL20.